Reading from the N-terminus, the 304-residue chain is MEENNQAFHSGFVAIVGRPNVGKSTFLNYVIGQKVAIMSNVPQTTRNKIQGIYTTDREQIVFIDTPGIHKSHNKLGDFMVQSAMSSLNEVDAIMFMVNADEPRGAGDNYIIERLKKITDRPVYLVINKIDLVHPDELLPIVDSYKDAMDWTEVFPISALQGNNINELVTTLSQHMPEGPKYYPDDQVTDHPERFVVSELIREKVLQLTRQEVPHSVAVVIETMKSNDEGLVNIQATIIVDRSSQKGIVIGKGGKMLKEIGSRARVDIEHLLGSRVYLELWVKVSEGWRDKQGILQSFGYKKDEY.

The Era-type G domain maps to 9-177 (HSGFVAIVGR…VTTLSQHMPE (169 aa)). A G1 region spans residues 17-24 (GRPNVGKS). 17–24 (GRPNVGKS) contributes to the GTP binding site. The G2 stretch occupies residues 43 to 47 (QTTRN). The tract at residues 64–67 (DTPG) is G3. Residues 64 to 68 (DTPGI) and 127 to 130 (NKID) each bind GTP. Residues 127–130 (NKID) are G4. The segment at 156-158 (ISA) is G5. Residues 208–285 (TRQEVPHSVA…YLELWVKVSE (78 aa)) form the KH type-2 domain.

It belongs to the TRAFAC class TrmE-Era-EngA-EngB-Septin-like GTPase superfamily. Era GTPase family. In terms of assembly, monomer.

It localises to the cytoplasm. Its subcellular location is the cell membrane. Functionally, an essential GTPase that binds both GDP and GTP, with rapid nucleotide exchange. Plays a role in 16S rRNA processing and 30S ribosomal subunit biogenesis and possibly also in cell cycle regulation and energy metabolism. The chain is GTPase Era from Pediococcus pentosaceus (strain ATCC 25745 / CCUG 21536 / LMG 10740 / 183-1w).